A 565-amino-acid chain; its full sequence is NAD-dependent malic enzyme (565 aa).

Tyr104 (proton donor) is an active-site residue. Arg157 contributes to the NAD(+) binding site. Lys175 serves as the catalytic Proton acceptor. Residues Glu246, Asp247, and Asp270 each coordinate a divalent metal cation. Residues Asp270 and Asn418 each contribute to the NAD(+) site.

The protein belongs to the malic enzymes family. Homotetramer. Mg(2+) serves as cofactor. It depends on Mn(2+) as a cofactor.

It carries out the reaction (S)-malate + NAD(+) = pyruvate + CO2 + NADH. It catalyses the reaction oxaloacetate + H(+) = pyruvate + CO2. In Escherichia coli (strain K12 / MC4100 / BW2952), this protein is NAD-dependent malic enzyme.